The chain runs to 309 residues: ATP-dependent Clp protease proteolytic subunit 3, chloroplastic (309 aa).

The N-terminal 70 residues, 1 to 70, are a transit peptide targeting the chloroplast; the sequence is MEMSLRLASS…WDVSSFSIDS (70 aa). N-acetylvaline is present on V71. Residue S164 is the Nucleophile of the active site. The active site involves H189. Residue T194 is modified to Phosphothreonine. A disordered region spans residues 290–309; that stretch reads DNTNLPSERSMTQNGYAAIE. The segment covering 292–309 has biased composition (polar residues); sequence TNLPSERSMTQNGYAAIE.

This sequence belongs to the peptidase S14 family. As to quaternary structure, component of the chloroplastic Clp protease core complex which consist of at least 16 proteins: CLPP4 (3 copies), CLPP5 (3 copies), CLPR4 (2 copies), ClpP1 (1 copy), CLPP6 (1 copy), CLPR2 (1 copy), CLPT1 (1 copy), CLPT2 (1 copy) and 3 copies of CLPP3 and/or CLPR1 and/or CLPR3. The core complex is organized in two heptameric rings, one containing CLPP3,4,5,6 in a 1:2:3:1 ratio and the other CLPP1 and CLPR1,2,3,4 in a 3:1:1:1:1 ratio. Interacts with CHIP. In terms of processing, ubiquitinated in vitro by CHIP. In terms of tissue distribution, mostly expressed in leaves. Also detected in stems, and to a lower extent, in roots (at protein level).

The protein resides in the plastid. Its subcellular location is the chloroplast stroma. The catalysed reaction is Hydrolysis of proteins to small peptides in the presence of ATP and magnesium. alpha-casein is the usual test substrate. In the absence of ATP, only oligopeptides shorter than five residues are hydrolyzed (such as succinyl-Leu-Tyr-|-NHMec, and Leu-Tyr-Leu-|-Tyr-Trp, in which cleavage of the -Tyr-|-Leu- and -Tyr-|-Trp bonds also occurs).. In terms of biological role, cleaves peptides in various proteins in a process that requires ATP hydrolysis. Has a chymotrypsin-like activity. Plays a major role in the degradation of misfolded proteins. In the absence of CLPP3, modified ClpPR core(s) could be formed, albeit at strongly reduced levels. The chain is ATP-dependent Clp protease proteolytic subunit 3, chloroplastic from Arabidopsis thaliana (Mouse-ear cress).